We begin with the raw amino-acid sequence, 272 residues long: HMP-PP phosphatase (272 aa).

D8 serves as the catalytic Nucleophile. The Mg(2+) site is built by D8, D10, and D212.

Belongs to the HAD-like hydrolase superfamily. Cof family. Mg(2+) is required as a cofactor.

It carries out the reaction 4-amino-2-methyl-5-(diphosphooxymethyl)pyrimidine + H2O = 4-amino-2-methyl-5-(phosphooxymethyl)pyrimidine + phosphate + H(+). Catalyzes the hydrolysis of 4-amino-2-methyl-5-hydroxymethylpyrimidine pyrophosphate (HMP-PP) to 4-amino-2-methyl-5-hydroxymethylpyrimidine phosphate (HMP-P). The chain is HMP-PP phosphatase from Escherichia coli O157:H7.